The chain runs to 338 residues: MRISVLGAGAWGTALASHAAQSHDVVLWGRDAALVAQMAATRANERYLPGIPLHASLRFEAEMSAALDHATGEDALVVIASPVAGLADLTRGVAAHGGVRNVIWLCKGFDPESGALPHAIVAGVLAQTGRADLATGALSGPSFAKEVAQGLPCAMTVASASTALCTRTQRAFHHHAMRVYASDDLVGVEVGGAVKNVLAIATGAADGLGLGLNARAALVTRGLAEMTRLGTALGGRPETFMGLTGMGDLLLTATGDLSRNRTVGMQLAQGRSLDEILAHLGHVAEGVRCARAVAALARAKGVDMPITFAVCEVLFDGLAPSRAVDRLLQRDAKAESVR.

The NADPH site is built by Trp-11, Arg-30, and Lys-107. Lys-107, Gly-140, and Ser-142 together coordinate sn-glycerol 3-phosphate. Residue Ala-144 participates in NADPH binding. Sn-glycerol 3-phosphate is bound by residues Lys-195, Asp-248, Ser-258, Arg-259, and Asn-260. The active-site Proton acceptor is Lys-195. Residue Arg-259 coordinates NADPH. 2 residues coordinate NADPH: Val-283 and Glu-285.

The protein belongs to the NAD-dependent glycerol-3-phosphate dehydrogenase family.

It is found in the cytoplasm. The catalysed reaction is sn-glycerol 3-phosphate + NAD(+) = dihydroxyacetone phosphate + NADH + H(+). The enzyme catalyses sn-glycerol 3-phosphate + NADP(+) = dihydroxyacetone phosphate + NADPH + H(+). It participates in membrane lipid metabolism; glycerophospholipid metabolism. Catalyzes the reduction of the glycolytic intermediate dihydroxyacetone phosphate (DHAP) to sn-glycerol 3-phosphate (G3P), the key precursor for phospholipid synthesis. The protein is Glycerol-3-phosphate dehydrogenase [NAD(P)+] of Ralstonia nicotianae (strain ATCC BAA-1114 / GMI1000) (Ralstonia solanacearum).